The sequence spans 214 residues: MPEILKIKPTRMELLKLKRRVKLAERGHKLLKEKQDALIMEFFTIYDEALSLRRELIKKMEEAFEALRRAQVDVGSLRLKEISIGVKPNEEIEIRTRNIMGVRVPLIEVPELKRKASDRGYAFISTTSTVDVAAEKFEEVLELAIRLAEVEESLKRLGKEIEKTKRRVNALEYIIIPRMKNTIKFIEQHLDEMERENFFRLKRVKAILEARQSM.

This sequence belongs to the V-ATPase D subunit family. In terms of assembly, has multiple subunits with at least A(3), B(3), C, D, E, F, H, I and proteolipid K(x).

It localises to the cell membrane. Functionally, component of the A-type ATP synthase that produces ATP from ADP in the presence of a proton gradient across the membrane. This Pyrococcus abyssi (strain GE5 / Orsay) protein is A-type ATP synthase subunit D.